Reading from the N-terminus, the 115-residue chain is Large ribosomal subunit protein uL24 (115 aa).

Belongs to the universal ribosomal protein uL24 family. In terms of assembly, part of the 50S ribosomal subunit.

Its function is as follows. One of two assembly initiator proteins, it binds directly to the 5'-end of the 23S rRNA, where it nucleates assembly of the 50S subunit. One of the proteins that surrounds the polypeptide exit tunnel on the outside of the subunit. This Beutenbergia cavernae (strain ATCC BAA-8 / DSM 12333 / CCUG 43141 / JCM 11478 / NBRC 16432 / NCIMB 13614 / HKI 0122) protein is Large ribosomal subunit protein uL24.